Here is a 629-residue protein sequence, read N- to C-terminus: 1-deoxy-D-xylulose-5-phosphate synthase (629 aa).

Residues His-72 and Gly-113 to Ala-115 each bind thiamine diphosphate. Asp-144 contacts Mg(2+). Thiamine diphosphate is bound by residues Gly-145–Ala-146, Asn-174, Tyr-287, and Glu-370. Asn-174 is a binding site for Mg(2+).

It belongs to the transketolase family. DXPS subfamily. Homodimer. It depends on Mg(2+) as a cofactor. Requires thiamine diphosphate as cofactor.

The catalysed reaction is D-glyceraldehyde 3-phosphate + pyruvate + H(+) = 1-deoxy-D-xylulose 5-phosphate + CO2. Its pathway is metabolic intermediate biosynthesis; 1-deoxy-D-xylulose 5-phosphate biosynthesis; 1-deoxy-D-xylulose 5-phosphate from D-glyceraldehyde 3-phosphate and pyruvate: step 1/1. Catalyzes the acyloin condensation reaction between C atoms 2 and 3 of pyruvate and glyceraldehyde 3-phosphate to yield 1-deoxy-D-xylulose-5-phosphate (DXP). The sequence is that of 1-deoxy-D-xylulose-5-phosphate synthase from Prochlorococcus marinus (strain MIT 9301).